The following is a 106-amino-acid chain: Large ribosomal subunit protein uL30 (106 aa).

This sequence belongs to the universal ribosomal protein uL30 family. As to quaternary structure, part of the 50S ribosomal subunit.

The protein is Large ribosomal subunit protein uL30 of Ruthia magnifica subsp. Calyptogena magnifica.